We begin with the raw amino-acid sequence, 147 residues long: 3-dehydroquinate dehydratase (147 aa).

Y26 serves as the catalytic Proton acceptor. N77, H83, and D90 together coordinate substrate. H103 (proton donor) is an active-site residue. Residues 104–105 (LS) and R114 each bind substrate.

This sequence belongs to the type-II 3-dehydroquinase family. As to quaternary structure, homododecamer.

It carries out the reaction 3-dehydroquinate = 3-dehydroshikimate + H2O. The protein operates within metabolic intermediate biosynthesis; chorismate biosynthesis; chorismate from D-erythrose 4-phosphate and phosphoenolpyruvate: step 3/7. In terms of biological role, catalyzes a trans-dehydration via an enolate intermediate. This is 3-dehydroquinate dehydratase from Proteus mirabilis (strain HI4320).